Here is a 449-residue protein sequence, read N- to C-terminus: Glucose-6-phosphate isomerase (449 aa).

The active-site Proton donor is the glutamate 291. Residues histidine 312 and lysine 426 contribute to the active site.

The protein belongs to the GPI family.

It localises to the cytoplasm. It carries out the reaction alpha-D-glucose 6-phosphate = beta-D-fructose 6-phosphate. It participates in carbohydrate biosynthesis; gluconeogenesis. The protein operates within carbohydrate degradation; glycolysis; D-glyceraldehyde 3-phosphate and glycerone phosphate from D-glucose: step 2/4. Functionally, catalyzes the reversible isomerization of glucose-6-phosphate to fructose-6-phosphate. The polypeptide is Glucose-6-phosphate isomerase (Streptococcus agalactiae serotype Ia (strain ATCC 27591 / A909 / CDC SS700)).